The primary structure comprises 1010 residues: Probable LRR receptor-like serine/threonine-protein kinase At3g47570 (1010 aa).

The N-terminal stretch at 1–19 is a signal peptide; it reads MRLFLLLAFNALMLLETHG. Topologically, residues 20–645 are extracellular; that stretch reads FTDETDRQAL…SSRLKKVVIG (626 aa). 2 N-linked (GlcNAc...) asparagine glycosylation sites follow: Asn48 and Asn88. 10 LRR repeats span residues 89-113, 114-137, 139-161, 162-185, 186-209, 211-233, 234-258, 259-282, 283-307, and 310-333; these read LSFL…VGQL, SRLE…LYNC, RLLN…LGSL, TNLV…LGNL, TLLE…VAQL, QIWS…LYNL, SSLK…GILL, PNLL…LSNI, STLE…NVPN, and LLFL…TSLT. An N-linked (GlcNAc...) asparagine glycan is attached at Asn136. Asn184 is a glycosylation site (N-linked (GlcNAc...) asparagine). Asn221 and Asn232 each carry an N-linked (GlcNAc...) asparagine glycan. 2 N-linked (GlcNAc...) asparagine glycosylation sites follow: Asn281 and Asn294. Residues Asn334 and Asn358 are each glycosylated (N-linked (GlcNAc...) asparagine). LRR repeat units follow at residues 335–359, 361–384, 385–408, 410–432, 433–455, 457–480, 481–504, 505–528, 530–551, 552–574, and 575–600; these read CTQL…IANL, AKLV…IGNL, INLQ…LGKL, NLRY…IGNM, TMLE…SLGN, SHLL…IMKI, QQLL…IGAL, QNLG…LGNC, TMES…LKGL, VGVK…YFAS, and FSKL…IFEN. N-linked (GlcNAc...) asparagine glycosylation is found at Asn431, Asn455, and Asn470. 2 N-linked (GlcNAc...) asparagine glycosylation sites follow: Asn582 and Asn600. A helical membrane pass occupies residues 646–666; it reads VSVGITLLLLLFMASVTLIWL. The Cytoplasmic portion of the chain corresponds to 667-1010; the sequence is RKRKKNKETN…FFKASRTTWR (344 aa). At Thr699 the chain carries Phosphothreonine. The region spanning 702–1002 is the Protein kinase domain; sequence FSSSNMVGSG…ELISIRERFF (301 aa). ATP-binding positions include 708–716 and Lys731; that span reads VGSGSFGTV. Phosphotyrosine occurs at positions 781 and 826. Asp839 acts as the Proton acceptor in catalysis. Tyr887 bears the Phosphotyrosine mark.

Belongs to the protein kinase superfamily. Ser/Thr protein kinase family.

The protein localises to the cell membrane. It carries out the reaction L-seryl-[protein] + ATP = O-phospho-L-seryl-[protein] + ADP + H(+). The catalysed reaction is L-threonyl-[protein] + ATP = O-phospho-L-threonyl-[protein] + ADP + H(+). The polypeptide is Probable LRR receptor-like serine/threonine-protein kinase At3g47570 (Arabidopsis thaliana (Mouse-ear cress)).